The chain runs to 267 residues: 2-keto-3-deoxy-L-rhamnonate aldolase (267 aa).

Catalysis depends on His-49, which acts as the Proton acceptor. Substrate is bound at residue Gln-151. Glu-153 is a Mg(2+) binding site. The substrate site is built by Ala-178 and Asp-179. Asp-179 lines the Mg(2+) pocket.

This sequence belongs to the HpcH/HpaI aldolase family. KDR aldolase subfamily. Homohexamer. The cofactor is Mg(2+).

It catalyses the reaction 2-dehydro-3-deoxy-L-rhamnonate = (S)-lactaldehyde + pyruvate. Functionally, catalyzes the reversible retro-aldol cleavage of 2-keto-3-deoxy-L-rhamnonate (KDR) to pyruvate and lactaldehyde. This chain is 2-keto-3-deoxy-L-rhamnonate aldolase, found in Escherichia coli O17:K52:H18 (strain UMN026 / ExPEC).